Here is a 249-residue protein sequence, read N- to C-terminus: uncharacterized protein (249 aa).

The region spanning 4-71 (VRINKFLSEA…RKRYIILNKP (68 aa)) is the S4 RNA-binding domain. Aspartate 106 acts as the Nucleophile in catalysis.

This sequence belongs to the pseudouridine synthase RsuA family.

The enzyme catalyses a uridine in RNA = a pseudouridine in RNA. This is an uncharacterized protein from Aquifex aeolicus (strain VF5).